The chain runs to 492 residues: N-succinylglutamate 5-semialdehyde dehydrogenase (492 aa).

220–225 (GSASTG) contributes to the NAD(+) binding site. Active-site residues include E243 and C277.

It belongs to the aldehyde dehydrogenase family. AstD subfamily.

The enzyme catalyses N-succinyl-L-glutamate 5-semialdehyde + NAD(+) + H2O = N-succinyl-L-glutamate + NADH + 2 H(+). It functions in the pathway amino-acid degradation; L-arginine degradation via AST pathway; L-glutamate and succinate from L-arginine: step 4/5. Catalyzes the NAD-dependent reduction of succinylglutamate semialdehyde into succinylglutamate. In Salmonella dublin (strain CT_02021853), this protein is N-succinylglutamate 5-semialdehyde dehydrogenase.